A 99-amino-acid polypeptide reads, in one-letter code: Bacterial microcompartment shell vertex protein EutN (99 aa).

The BMV domain occupies 5–87 (MKLAVVTGQI…VDLCVIGIVD (83 aa)).

The protein belongs to the CcmL/EutN family. As to quaternary structure, homopentamer with a small central pore.

The protein localises to the bacterial microcompartment. Its pathway is amine and polyamine degradation; ethanolamine degradation. In terms of biological role, probably forms vertices in the bacterial microcompartment (BMC) shell dedicated to ethanolamine degradation. Expression of eutK, eutL, eutM, eutN, eutS (eutSMNLK) in E.coli leads to formation of a single BMC. Coexpression of eutQ with eutSMNLK permits E.coli to make cells with more than one mobile BMC, as is usual in vivo. It may be involved in transporting positively charged molecules into and out of the BMC. Functionally, the ethanolamine (EA) catabolic bacterial microcompartment (BMC) probably concentrates low levels of ethanolamine catabolic enzymes, concentrates volatile reaction intermediates, keeps the level of toxic acetaldehyde low, generates enough acetyl-CoA to support cell growth, and maintains a pool of free coenzyme A (CoA) and NAD. Expression of the eut operon allows this bacteria to use ethanolamine (EA) as a carbon, nitrogen and energy source. It relies on cobalamin (vitamin B12) both as a cofactor for the ethanolamine ammonia-lyase (EAL) activity and to induce the operon. EA enhances bacterial survival in macrophages in a concentration-dependent manner, suggesting it is an important nutrient during infection. This Salmonella typhimurium (strain LT2 / SGSC1412 / ATCC 700720) protein is Bacterial microcompartment shell vertex protein EutN.